The following is an 85-amino-acid chain: Putative membrane protein insertion efficiency factor (85 aa).

Belongs to the UPF0161 family.

The protein resides in the cell inner membrane. In terms of biological role, could be involved in insertion of integral membrane proteins into the membrane. This Phenylobacterium zucineum (strain HLK1) protein is Putative membrane protein insertion efficiency factor.